A 456-amino-acid chain; its full sequence is MATAYIIGLGRSGIAAARLLKIQGWEVILSDRAHSPNLEITQQELGQEGITVKLADHPSLIDSNLPNLIVVSPGVPWDVNFLQEARDRGIDVIGELELAWRSLQSSPWVGITGTNGKTTTTALVAAIFQASGLNAPSCGNIGYAACELALSQTKTKASSFDWIIAEVSSYQIESSRELAPKIGIWTTFTPDHLSRHKTLDNYYAIKASLLRRCELQIFNGDDPYLHQVGLHQWADAYWTTVKGKEHLLCDAAKGVYLQDNWIVAFGELIAPLNLFKMVGVHNQQNLLMAVGAARLAGIEKGAIAQAIATFKGVPHRLELITNIDGIDFINDSKATNYDAAEVGLVSVNASVILIAGGEAKEGDDRRWIEQIKAKVATVLLIGEAATAFAQRLQQSNYEAYEIVETMDNAVKRGLELAKKQQAKVVLLSPACASFDQYQSFEHRGDHFRQLCQALKE.

113-119 (GTNGKTT) contacts ATP.

It belongs to the MurCDEF family.

Its subcellular location is the cytoplasm. The catalysed reaction is UDP-N-acetyl-alpha-D-muramoyl-L-alanine + D-glutamate + ATP = UDP-N-acetyl-alpha-D-muramoyl-L-alanyl-D-glutamate + ADP + phosphate + H(+). Its pathway is cell wall biogenesis; peptidoglycan biosynthesis. Cell wall formation. Catalyzes the addition of glutamate to the nucleotide precursor UDP-N-acetylmuramoyl-L-alanine (UMA). This is UDP-N-acetylmuramoylalanine--D-glutamate ligase from Rippkaea orientalis (strain PCC 8801 / RF-1) (Cyanothece sp. (strain PCC 8801)).